The following is a 230-amino-acid chain: Ribose-5-phosphate isomerase A (230 aa).

Residues 29-32 (TGST), 85-88 (DGAD), and 99-102 (KGAG) each bind substrate. The active-site Proton acceptor is Glu-108. A substrate-binding site is contributed by Lys-126.

Belongs to the ribose 5-phosphate isomerase family. In terms of assembly, homodimer.

The enzyme catalyses aldehydo-D-ribose 5-phosphate = D-ribulose 5-phosphate. Its pathway is carbohydrate degradation; pentose phosphate pathway; D-ribose 5-phosphate from D-ribulose 5-phosphate (non-oxidative stage): step 1/1. Functionally, catalyzes the reversible conversion of ribose-5-phosphate to ribulose 5-phosphate. The sequence is that of Ribose-5-phosphate isomerase A from Synechococcus sp. (strain JA-3-3Ab) (Cyanobacteria bacterium Yellowstone A-Prime).